Here is a 317-residue protein sequence, read N- to C-terminus: Methionyl-tRNA formyltransferase (317 aa).

Residue Ser-112 to Pro-115 coordinates (6S)-5,6,7,8-tetrahydrofolate.

Belongs to the Fmt family.

The enzyme catalyses L-methionyl-tRNA(fMet) + (6R)-10-formyltetrahydrofolate = N-formyl-L-methionyl-tRNA(fMet) + (6S)-5,6,7,8-tetrahydrofolate + H(+). Functionally, attaches a formyl group to the free amino group of methionyl-tRNA(fMet). The formyl group appears to play a dual role in the initiator identity of N-formylmethionyl-tRNA by promoting its recognition by IF2 and preventing the misappropriation of this tRNA by the elongation apparatus. The sequence is that of Methionyl-tRNA formyltransferase from Actinobacillus succinogenes (strain ATCC 55618 / DSM 22257 / CCUG 43843 / 130Z).